The following is a 534-amino-acid chain: Peptide chain release factor 3 (534 aa).

The 270-residue stretch at 9–278 (ARRRTFAIIS…FFVEHAPPPQ (270 aa)) folds into the tr-type G domain. Residues 18-25 (SHPDAGKT), 86-90 (DTPGH), and 140-143 (NKLD) each bind GTP.

The protein belongs to the TRAFAC class translation factor GTPase superfamily. Classic translation factor GTPase family. PrfC subfamily.

It is found in the cytoplasm. Its function is as follows. Increases the formation of ribosomal termination complexes and stimulates activities of RF-1 and RF-2. It binds guanine nucleotides and has strong preference for UGA stop codons. It may interact directly with the ribosome. The stimulation of RF-1 and RF-2 is significantly reduced by GTP and GDP, but not by GMP. The chain is Peptide chain release factor 3 from Xanthomonas axonopodis pv. citri (strain 306).